Consider the following 235-residue polypeptide: Urease accessory protein UreF (235 aa).

Belongs to the UreF family. As to quaternary structure, ureD, UreF and UreG form a complex that acts as a GTP-hydrolysis-dependent molecular chaperone, activating the urease apoprotein by helping to assemble the nickel containing metallocenter of UreC. The UreE protein probably delivers the nickel.

Its subcellular location is the cytoplasm. In terms of biological role, required for maturation of urease via the functional incorporation of the urease nickel metallocenter. The polypeptide is Urease accessory protein UreF (Psychrobacter cryohalolentis (strain ATCC BAA-1226 / DSM 17306 / VKM B-2378 / K5)).